Here is a 132-residue protein sequence, read N- to C-terminus: Small ribosomal subunit protein uS8 (132 aa).

Belongs to the universal ribosomal protein uS8 family. In terms of assembly, part of the 30S ribosomal subunit. Contacts proteins S5 and S12.

Functionally, one of the primary rRNA binding proteins, it binds directly to 16S rRNA central domain where it helps coordinate assembly of the platform of the 30S subunit. The chain is Small ribosomal subunit protein uS8 from Rickettsia massiliae (strain Mtu5).